Consider the following 196-residue polypeptide: Imidazoleglycerol-phosphate dehydratase (196 aa).

This sequence belongs to the imidazoleglycerol-phosphate dehydratase family.

It localises to the cytoplasm. The enzyme catalyses D-erythro-1-(imidazol-4-yl)glycerol 3-phosphate = 3-(imidazol-4-yl)-2-oxopropyl phosphate + H2O. Its pathway is amino-acid biosynthesis; L-histidine biosynthesis; L-histidine from 5-phospho-alpha-D-ribose 1-diphosphate: step 6/9. This chain is Imidazoleglycerol-phosphate dehydratase, found in Caulobacter sp. (strain K31).